Here is a 376-residue protein sequence, read N- to C-terminus: Adipocyte plasma membrane-associated protein (376 aa).

Residues 1–17 (MTFLMLAVSLAIPLLGA) form a helical membrane-spanning segment. An N-linked (GlcNAc...) asparagine glycan is attached at Asn-120.

Belongs to the strictosidine synthase family.

The protein resides in the membrane. In terms of biological role, exhibits strong arylesterase activity with beta-naphthyl acetate and phenyl acetate. May play a role in adipocyte differentiation. The protein is Adipocyte plasma membrane-associated protein (Apmap) of Rattus norvegicus (Rat).